Reading from the N-terminus, the 91-residue chain is Elongation factor 1-beta (91 aa).

Belongs to the EF-1-beta/EF-1-delta family.

Its function is as follows. Promotes the exchange of GDP for GTP in EF-1-alpha/GDP, thus allowing the regeneration of EF-1-alpha/GTP that could then be used to form the ternary complex EF-1-alpha/GTP/AAtRNA. This Metallosphaera sedula (strain ATCC 51363 / DSM 5348 / JCM 9185 / NBRC 15509 / TH2) protein is Elongation factor 1-beta.